We begin with the raw amino-acid sequence, 523 residues long: MPGINGAGPSNFFWQWRTDGEPVTEREHDSSRSASSANSPEFPPPASPAESGRQRLLRSSALSRQTREWLEATPARVQGATPPAEARQSPEAQQAERIVQELVRGGADLNNVRTMLRNVMDNNAVAFSRVERDILLQHFPNMLMTGISSDSVLANELRQRLRQTVRQQRIQSSTPARLADSSSGSSQRSLIGRSTMLMTPGRSSSSSAAASRTSVDRHPQGLDLESNEVLRRLTQEGVDMERLRTSLGRYIMSLEPLPPDLRRALESVGINPFMPEDLSLVDHPVLNFSAALNRMLASRQTTTNSPELPPLASSAESGRRRLLRSPPLLSGQREWIEQNMRQEAEPQSSRLNRAVRLAVMPPQNENEDNVAYAIRLRRLNPGADVSRVVASFITDPAARQQVVNDIRAALDIAPQFSQLRTISKADAESEELGFRDAADHPDNATSCLFGEELSLSNPDQQVIGLAVNPTDKPQPYSQEVNKALTFMDMKKLAQYLADKPEHPLNRQRLDAKNIAKYAFKIVP.

Disordered stretches follow at residues 1 to 94 (MPGI…EAQQ), 165 to 223 (VRQQ…QGLD), and 299 to 320 (RQTT…SGRR). Residues 18 to 31 (TDGEPVTEREHDSS) are compositionally biased toward basic and acidic residues. The segment covering 181-194 (SSSGSSQRSLIGRS) has biased composition (low complexity).

It belongs to the HopAB family.

Its subcellular location is the secreted. Effector protein that plays different roles depending on the species and plant cultivars that interact with the pathogen. Acts as a virulence determinant by enhancing the development of disease symptoms and bacterial growth. Acts as an avirulence factor by eliciting hypersensitive response (HR) and plant resistance. This is Effector protein hopAB1 (hopAB1) from Pseudomonas savastanoi pv. glycinea (Pseudomonas syringae pv. glycinea).